Consider the following 205-residue polypeptide: Putative 3-methyladenine DNA glycosylase (205 aa).

The protein belongs to the DNA glycosylase MPG family.

The chain is Putative 3-methyladenine DNA glycosylase from Bacillus cereus (strain ATCC 10987 / NRS 248).